The chain runs to 121 residues: Ribosome-binding factor A (121 aa).

This sequence belongs to the RbfA family. As to quaternary structure, monomer. Binds 30S ribosomal subunits, but not 50S ribosomal subunits or 70S ribosomes.

Its subcellular location is the cytoplasm. One of several proteins that assist in the late maturation steps of the functional core of the 30S ribosomal subunit. Associates with free 30S ribosomal subunits (but not with 30S subunits that are part of 70S ribosomes or polysomes). Required for efficient processing of 16S rRNA. May interact with the 5'-terminal helix region of 16S rRNA. The chain is Ribosome-binding factor A from Clostridium novyi (strain NT).